The chain runs to 152 residues: Deoxyuridine 5'-triphosphate nucleotidohydrolase (152 aa).

Residues 71 to 73 (RSG), N84, 88 to 90 (LID), and M98 contribute to the substrate site.

Belongs to the dUTPase family. Requires Mg(2+) as cofactor.

It catalyses the reaction dUTP + H2O = dUMP + diphosphate + H(+). It participates in pyrimidine metabolism; dUMP biosynthesis; dUMP from dCTP (dUTP route): step 2/2. Its function is as follows. This enzyme is involved in nucleotide metabolism: it produces dUMP, the immediate precursor of thymidine nucleotides and it decreases the intracellular concentration of dUTP so that uracil cannot be incorporated into DNA. The protein is Deoxyuridine 5'-triphosphate nucleotidohydrolase of Shewanella sp. (strain MR-7).